Here is a 474-residue protein sequence, read N- to C-terminus: Peroxisome proliferator-activated receptor alpha (474 aa).

Residues 106–180 (NLECRVCSDK…VGMSHNAIRF (75 aa)) constitute a DNA-binding region (nuclear receptor). 2 NR C4-type zinc fingers span residues 109–129 (CRVC…CEGC) and 146–168 (CERM…FEKC). An NR LBD domain is found at 245–472 (FVIHDMETLC…HPLLQEIYRD (228 aa)).

The protein belongs to the nuclear hormone receptor family. NR1 subfamily. As to quaternary structure, heterodimer with the retinoid X receptor. Ubiquitous.

The protein localises to the nucleus. Ligand-activated transcription factor. Key regulator of lipid metabolism. Activated by lipids. Receptor for peroxisome proliferators such as hypolipidemic drugs and fatty acids. Once activated by a ligand, the receptor binds to promoter elements of target genes. Regulates the peroxisomal beta-oxidation pathway of fatty acids. This chain is Peroxisome proliferator-activated receptor alpha (ppara), found in Xenopus laevis (African clawed frog).